The sequence spans 609 residues: Glutamine--fructose-6-phosphate aminotransferase [isomerizing] (609 aa).

Cys-2 (nucleophile; for GATase activity) is an active-site residue. The Glutamine amidotransferase type-2 domain occupies 2-217; sequence CGIVGAIAGR…EGDTAELRRD (216 aa). SIS domains follow at residues 284 to 425 and 458 to 599; these read TADA…LQGR and WAER…VDKP. Lys-604 serves as the catalytic For Fru-6P isomerization activity.

In terms of assembly, homodimer.

The protein resides in the cytoplasm. It catalyses the reaction D-fructose 6-phosphate + L-glutamine = D-glucosamine 6-phosphate + L-glutamate. In terms of biological role, catalyzes the first step in hexosamine metabolism, converting fructose-6P into glucosamine-6P using glutamine as a nitrogen source. This chain is Glutamine--fructose-6-phosphate aminotransferase [isomerizing], found in Xanthomonas campestris pv. campestris (strain ATCC 33913 / DSM 3586 / NCPPB 528 / LMG 568 / P 25).